Reading from the N-terminus, the 391-residue chain is Formate-dependent phosphoribosylglycinamide formyltransferase (391 aa).

N(1)-(5-phospho-beta-D-ribosyl)glycinamide is bound by residues 18–19 (EL) and glutamate 78. ATP contacts are provided by residues arginine 110, lysine 151, 156 to 161 (SSGKGQ), 191 to 194 (EEFI), and glutamate 199. The ATP-grasp domain maps to 115-305 (DLAAQQLGLR…EFELHLRAVL (191 aa)). Mg(2+) contacts are provided by glutamate 264 and glutamate 276. Residues aspartate 283, lysine 353, and 360-361 (RR) each bind N(1)-(5-phospho-beta-D-ribosyl)glycinamide.

It belongs to the PurK/PurT family. As to quaternary structure, homodimer.

The catalysed reaction is N(1)-(5-phospho-beta-D-ribosyl)glycinamide + formate + ATP = N(2)-formyl-N(1)-(5-phospho-beta-D-ribosyl)glycinamide + ADP + phosphate + H(+). It functions in the pathway purine metabolism; IMP biosynthesis via de novo pathway; N(2)-formyl-N(1)-(5-phospho-D-ribosyl)glycinamide from N(1)-(5-phospho-D-ribosyl)glycinamide (formate route): step 1/1. Functionally, involved in the de novo purine biosynthesis. Catalyzes the transfer of formate to 5-phospho-ribosyl-glycinamide (GAR), producing 5-phospho-ribosyl-N-formylglycinamide (FGAR). Formate is provided by PurU via hydrolysis of 10-formyl-tetrahydrofolate. The sequence is that of Formate-dependent phosphoribosylglycinamide formyltransferase from Synechococcus elongatus (strain ATCC 33912 / PCC 7942 / FACHB-805) (Anacystis nidulans R2).